The following is a 359-amino-acid chain: Protein RecA (359 aa).

77–84 provides a ligand contact to ATP; sequence GPESSGKT.

This sequence belongs to the RecA family.

The protein resides in the cytoplasm. Its function is as follows. Can catalyze the hydrolysis of ATP in the presence of single-stranded DNA, the ATP-dependent uptake of single-stranded DNA by duplex DNA, and the ATP-dependent hybridization of homologous single-stranded DNAs. It interacts with LexA causing its activation and leading to its autocatalytic cleavage. This Paramagnetospirillum magneticum (strain ATCC 700264 / AMB-1) (Magnetospirillum magneticum) protein is Protein RecA.